Here is a 143-residue protein sequence, read N- to C-terminus: 5-hydroxymethyl-dUMP N-hydrolase (143 aa).

Residues Gly7, Ile9, Arg10, Gly11, Ser77, Gly79, Glu83, and Ser107 each contribute to the 5-hydroxymethyl-dUMP site.

Belongs to the 2'-deoxynucleoside 5'-phosphate N-hydrolase 1 family. In terms of assembly, monomer and homodimer.

The protein resides in the cytoplasm. It localises to the nucleus. It catalyses the reaction 5-hydroxymethyl-dUMP + H2O = 5-hydroxymethyluracil + 2-deoxy-D-ribose 5-phosphate. Functionally, part of a nucleotide salvage pathway that eliminates epigenetically modified 5-hydroxymethyl-dCMP (hmdCMP) in a two-step process entailing deamination to cytotoxic 5-hydroxymethyl-dUMP (hmdUMP), followed by its hydrolysis into 5-hydroxymethyluracil (hmU) and 2-deoxy-D-ribose 5-phosphate (deoxyribosephosphate). In Danio rerio (Zebrafish), this protein is 5-hydroxymethyl-dUMP N-hydrolase (dnph1).